The chain runs to 642 residues: Acid beta-fructofuranosidase (642 aa).

Topologically, residues 1 to 22 (MRNDSPYTPLLNASHNNHRRRE) are cytoplasmic. Positions 1–95 (MRNDSPYTPL…LSGNLVGEGG (95 aa)) are cleaved as a propeptide — removed in mature form. Residues 23-43 (LLLLFSGLLLLASIIAFSAYI) form a helical; Signal-anchor for type II membrane protein membrane-spanning segment. The Lumenal portion of the chain corresponds to 44 to 642 (AQPHADADVS…YHPDQKRQTS (599 aa)). Asn-100 carries an N-linked (GlcNAc...) asparagine glycan. Residues 119–122 (WMND), Gln-138, Trp-146, 181–182 (WT), and 245–246 (RD) contribute to the substrate site. Asp-122 is a catalytic residue. Asn-267 is a glycosylation site (N-linked (GlcNAc...) asparagine). The substrate site is built by Glu-300 and Asp-333. Cys-490 and Cys-538 are disulfide-bonded. N-linked (GlcNAc...) asparagine glycans are attached at residues Asn-491 and Asn-615.

It belongs to the glycosyl hydrolase 32 family. May be present in two forms, a 70 kDa monomer and a heterodimer of the 30 kDa and 38 kDa subunits. The ratio of the levels of the two forms within cells appears to be regulated developmentally.

It is found in the membrane. It localises to the vacuole. The protein resides in the vacuole lumen. The enzyme catalyses Hydrolysis of terminal non-reducing beta-D-fructofuranoside residues in beta-D-fructofuranosides.. The protein operates within glycan biosynthesis; sucrose metabolism. In Vicia faba (Broad bean), this protein is Acid beta-fructofuranosidase (VCINV).